Reading from the N-terminus, the 356-residue chain is Histidinol-phosphate aminotransferase (356 aa).

Lysine 213 carries the N6-(pyridoxal phosphate)lysine modification.

Belongs to the class-II pyridoxal-phosphate-dependent aminotransferase family. Histidinol-phosphate aminotransferase subfamily. Homodimer. Pyridoxal 5'-phosphate is required as a cofactor.

The catalysed reaction is L-histidinol phosphate + 2-oxoglutarate = 3-(imidazol-4-yl)-2-oxopropyl phosphate + L-glutamate. It functions in the pathway amino-acid biosynthesis; L-histidine biosynthesis; L-histidine from 5-phospho-alpha-D-ribose 1-diphosphate: step 7/9. The polypeptide is Histidinol-phosphate aminotransferase (Clostridium novyi (strain NT)).